The sequence spans 194 residues: Ion-translocating oxidoreductase complex subunit B (194 aa).

The interval 1–26 (MSSILIAVIAISALALVFGLILGFAS) is hydrophobic. Residues 32 to 90 (ESDPIVDQIDSILPQTQCGQCGYPGCKPYAEAIANGDTINKCPPGGQATIEKLADLMGV) form the 4Fe-4S domain. Positions 49, 52, 57, 73, 114, 117, 120, 124, 144, 147, 150, and 154 each coordinate [4Fe-4S] cluster. 4Fe-4S ferredoxin-type domains follow at residues 105–134 (KIAF…GGTK) and 135–164 (ALHT…MIPV).

This sequence belongs to the 4Fe4S bacterial-type ferredoxin family. RnfB subfamily. As to quaternary structure, the complex is composed of six subunits: RnfA, RnfB, RnfC, RnfD, RnfE and RnfG. The cofactor is [4Fe-4S] cluster.

The protein resides in the cell inner membrane. In terms of biological role, part of a membrane-bound complex that couples electron transfer with translocation of ions across the membrane. This chain is Ion-translocating oxidoreductase complex subunit B, found in Aliivibrio salmonicida (strain LFI1238) (Vibrio salmonicida (strain LFI1238)).